Here is a 468-residue protein sequence, read N- to C-terminus: 23S rRNA (uracil(1939)-C(5))-methyltransferase RlmD (468 aa).

The TRAM domain maps to 12–70; it reads SKQLSPKLSLNVTQLDHLGAGMAQHQGKVVFIPQALPGERVSVQLTDQKKSFAKAKLIK. Cys83, Cys89, Cys92, and Cys174 together coordinate [4Fe-4S] cluster. Gln296, Phe325, Asn330, Glu351, Asp378, and Asp398 together coordinate S-adenosyl-L-methionine. Cys424 serves as the catalytic Nucleophile.

Belongs to the class I-like SAM-binding methyltransferase superfamily. RNA M5U methyltransferase family. RlmD subfamily.

The enzyme catalyses uridine(1939) in 23S rRNA + S-adenosyl-L-methionine = 5-methyluridine(1939) in 23S rRNA + S-adenosyl-L-homocysteine + H(+). Its function is as follows. Catalyzes the formation of 5-methyl-uridine at position 1939 (m5U1939) in 23S rRNA. The chain is 23S rRNA (uracil(1939)-C(5))-methyltransferase RlmD from Shewanella denitrificans (strain OS217 / ATCC BAA-1090 / DSM 15013).